The following is a 630-amino-acid chain: 1-deoxy-D-xylulose-5-phosphate synthase (630 aa).

Thiamine diphosphate contacts are provided by residues H72 and G113–S115. D144 serves as a coordination point for Mg(2+). Thiamine diphosphate is bound by residues G145–A146, N173, Y284, and E367. N173 provides a ligand contact to Mg(2+).

It belongs to the transketolase family. DXPS subfamily. In terms of assembly, homodimer. Mg(2+) is required as a cofactor. Thiamine diphosphate serves as cofactor.

The enzyme catalyses D-glyceraldehyde 3-phosphate + pyruvate + H(+) = 1-deoxy-D-xylulose 5-phosphate + CO2. The protein operates within metabolic intermediate biosynthesis; 1-deoxy-D-xylulose 5-phosphate biosynthesis; 1-deoxy-D-xylulose 5-phosphate from D-glyceraldehyde 3-phosphate and pyruvate: step 1/1. Functionally, catalyzes the acyloin condensation reaction between C atoms 2 and 3 of pyruvate and glyceraldehyde 3-phosphate to yield 1-deoxy-D-xylulose-5-phosphate (DXP). The chain is 1-deoxy-D-xylulose-5-phosphate synthase from Bacillus cereus (strain ATCC 10987 / NRS 248).